The following is a 372-amino-acid chain: tRNA pseudouridine synthase D (372 aa).

The Nucleophile role is filled by D85. Residues 160–330 (GFANYFGYQR…MQGSRRFMWG (171 aa)) enclose the TRUD domain.

It belongs to the pseudouridine synthase TruD family.

The catalysed reaction is uridine(13) in tRNA = pseudouridine(13) in tRNA. Functionally, responsible for synthesis of pseudouridine from uracil-13 in transfer RNAs. This Campylobacter jejuni subsp. jejuni serotype O:6 (strain 81116 / NCTC 11828) protein is tRNA pseudouridine synthase D.